The following is a 397-amino-acid chain: Major outer membrane porin, serovar L3 (397 aa).

A signal peptide spans 1 to 22 (MKKLLKSVLVFAALSSASSLQA).

This sequence belongs to the chlamydial porin (CP) (TC 1.B.2) family. As to quaternary structure, part of a disulfide cross-linked outer membrane complex (COMC) composed of the major outer membrane porin (MOMP), the small cysteine-rich protein (OmcA) and the large cysteine-rich periplasmic protein (OmcB).

It localises to the cell outer membrane. In terms of biological role, in elementary bodies (EBs, the infectious stage, which is able to survive outside the host cell) provides the structural integrity of the outer envelope through disulfide cross-links with the small cysteine-rich protein and the large cysteine-rich periplasmic protein. It has been described in publications as the Sarkosyl-insoluble COMC (Chlamydia outer membrane complex), and serves as the functional equivalent of peptidoglycan. Functionally, permits diffusion of specific solutes through the outer membrane. This Chlamydia trachomatis protein is Major outer membrane porin, serovar L3 (ompA).